Here is a 1203-residue protein sequence, read N- to C-terminus: DNA-directed RNA polymerase subunit beta' (1203 aa).

Zn(2+)-binding residues include C60, C62, C75, and C78. Mg(2+) contacts are provided by D449, D451, and D453. Zn(2+) is bound by residues C818, C892, C899, and C902.

Belongs to the RNA polymerase beta' chain family. The RNAP catalytic core consists of 2 alpha, 1 beta, 1 beta' and 1 omega subunit. When a sigma factor is associated with the core the holoenzyme is formed, which can initiate transcription. It depends on Mg(2+) as a cofactor. The cofactor is Zn(2+).

The enzyme catalyses RNA(n) + a ribonucleoside 5'-triphosphate = RNA(n+1) + diphosphate. DNA-dependent RNA polymerase catalyzes the transcription of DNA into RNA using the four ribonucleoside triphosphates as substrates. This chain is DNA-directed RNA polymerase subunit beta', found in Bacillus anthracis.